The sequence spans 250 residues: NADH-quinone oxidoreductase subunit C (250 aa).

It belongs to the complex I 30 kDa subunit family. In terms of assembly, NDH-1 is composed of 14 different subunits. Subunits NuoB, C, D, E, F, and G constitute the peripheral sector of the complex.

It is found in the cell inner membrane. The catalysed reaction is a quinone + NADH + 5 H(+)(in) = a quinol + NAD(+) + 4 H(+)(out). Its function is as follows. NDH-1 shuttles electrons from NADH, via FMN and iron-sulfur (Fe-S) centers, to quinones in the respiratory chain. The immediate electron acceptor for the enzyme in this species is believed to be ubiquinone. Couples the redox reaction to proton translocation (for every two electrons transferred, four hydrogen ions are translocated across the cytoplasmic membrane), and thus conserves the redox energy in a proton gradient. The protein is NADH-quinone oxidoreductase subunit C of Xylella fastidiosa (strain 9a5c).